The following is a 480-amino-acid chain: Endothelial transcription factor GATA-2 (480 aa).

Position 73 is a phosphoserine (Ser-73). The residue at position 86 (Arg-86) is an Asymmetric dimethylarginine. The segment at 119-209 (SPFSKTPLHP…GSAARGEDKD (91 aa)) is disordered. A compositionally biased stretch (gly residues) spans 143 to 153 (GAGGGSGGGSG). Residues 185-203 (PSTTGAASPASSSAGGSAA) are compositionally biased toward low complexity. Ser-192 is subject to Phosphoserine. 2 GATA-type zinc fingers span residues 295-319 (CVNC…CNAC) and 349-373 (CANC…CNAC). Residue Lys-389 forms a Glycyl lysine isopeptide (Lys-Gly) (interchain with G-Cter in SUMO2) linkage. Residues 448 to 480 (HSGHILPTPTPIHPSSSLSFGHPHPSSMVTAMG) form a disordered region.

In terms of assembly, interacts with BRD3. Interacts with AR and CCAR1. Interacts with MDFIC. As to expression, endothelial cells.

It is found in the nucleus. Transcriptional activator which regulates endothelin-1 gene expression in endothelial cells. Binds to the consensus sequence 5'-AGATAG-3'. The protein is Endothelial transcription factor GATA-2 (GATA2) of Homo sapiens (Human).